Consider the following 338-residue polypeptide: Ketol-acid reductoisomerase (NADP(+)) (338 aa).

Residues M1–T181 enclose the KARI N-terminal Rossmann domain. Residues Y24–Q27, R47, and S52 contribute to the NADP(+) site. Residue H107 is part of the active site. G133 lines the NADP(+) pocket. One can recognise a KARI C-terminal knotted domain in the interval N182–I327. D190, E194, E226, and E230 together coordinate Mg(2+). S251 provides a ligand contact to substrate.

It belongs to the ketol-acid reductoisomerase family. Mg(2+) serves as cofactor.

The enzyme catalyses (2R)-2,3-dihydroxy-3-methylbutanoate + NADP(+) = (2S)-2-acetolactate + NADPH + H(+). It carries out the reaction (2R,3R)-2,3-dihydroxy-3-methylpentanoate + NADP(+) = (S)-2-ethyl-2-hydroxy-3-oxobutanoate + NADPH + H(+). It participates in amino-acid biosynthesis; L-isoleucine biosynthesis; L-isoleucine from 2-oxobutanoate: step 2/4. The protein operates within amino-acid biosynthesis; L-valine biosynthesis; L-valine from pyruvate: step 2/4. In terms of biological role, involved in the biosynthesis of branched-chain amino acids (BCAA). Catalyzes an alkyl-migration followed by a ketol-acid reduction of (S)-2-acetolactate (S2AL) to yield (R)-2,3-dihydroxy-isovalerate. In the isomerase reaction, S2AL is rearranged via a Mg-dependent methyl migration to produce 3-hydroxy-3-methyl-2-ketobutyrate (HMKB). In the reductase reaction, this 2-ketoacid undergoes a metal-dependent reduction by NADPH to yield (R)-2,3-dihydroxy-isovalerate. This is Ketol-acid reductoisomerase (NADP(+)) from Burkholderia ambifaria (strain MC40-6).